The sequence spans 248 residues: Gas vesicle protein J (248 aa).

One copy of the 1; truncated repeat lies at 121–140; it reads DVKDDLYQTSAKIPSPVDTP. The tract at residues 121 to 245 is 6 X 21 AA approximate tandem repeats; the sequence is DVKDDLYQTS…EEIPSSVDPA (125 aa). Repeat copies occupy residues 141–161, 162–182, 183–203, 204–224, and 225–245.

It belongs to the gas vesicle GvpA family. Interacts with GvpA.

It is found in the gas vesicle. Its function is as follows. A minor component of the gas vesicle, might be involved in nucleating gas vesicle formation. Gas vesicles (GV) are hollow, gas filled proteinaceous nanostructures. During planktonic growth they allow positioning of the organism at a favorable depth for light or nutrient acquisition. The chain is Gas vesicle protein J from Dolichospermum flosaquae (Anabaena flos-aquae).